We begin with the raw amino-acid sequence, 222 residues long: Cytochrome b6 (222 aa).

The helical transmembrane segment at 39 to 59 threads the bilayer; that stretch reads IFYCLGGITLVCFLVQFATGF. Cys42 is a binding site for heme c. Positions 93 and 107 each coordinate heme b. 3 consecutive transmembrane segments (helical) span residues 97 to 117, 123 to 143, and 193 to 213; these read ASMM…TGGF, LTWM…VTGY, and LHTF…FLMI. His194 and His209 together coordinate heme b.

The protein belongs to the cytochrome b family. PetB subfamily. The 4 large subunits of the cytochrome b6-f complex are cytochrome b6, subunit IV (17 kDa polypeptide, PetD), cytochrome f and the Rieske protein, while the 4 small subunits are PetG, PetL, PetM and PetN. The complex functions as a dimer. Heme b serves as cofactor. The cofactor is heme c.

Its subcellular location is the cellular thylakoid membrane. In terms of biological role, component of the cytochrome b6-f complex, which mediates electron transfer between photosystem II (PSII) and photosystem I (PSI), cyclic electron flow around PSI, and state transitions. The sequence is that of Cytochrome b6 from Crocosphaera subtropica (strain ATCC 51142 / BH68) (Cyanothece sp. (strain ATCC 51142)).